Here is a 186-residue protein sequence, read N- to C-terminus: Homeobox expressed in ES cells 1 (186 aa).

Residues G109 to H168 constitute a DNA-binding region (homeobox).

This sequence belongs to the ANF homeobox family. As to quaternary structure, interacts (via N-terminus) with zyx.

Its subcellular location is the nucleus. Functionally, regulates the earliest stages of development of the anterior neural plate. Plays a role in forebrain development by inhibiting the expression of otx2 and pax6 in the rostral region of the anterior neural plate. Necessary for both neural differentiation and neural patterning. Controls Spemann organizer development. May act as a transcriptional repressor. The chain is Homeobox expressed in ES cells 1 from Xenopus tropicalis (Western clawed frog).